The following is a 363-amino-acid chain: Flagellar P-ring protein (363 aa).

The N-terminal stretch at 1–20 (MKYRLIVALAMLVLSLPSQA) is a signal peptide.

Belongs to the FlgI family. The basal body constitutes a major portion of the flagellar organelle and consists of four rings (L,P,S, and M) mounted on a central rod.

The protein localises to the periplasm. The protein resides in the bacterial flagellum basal body. Assembles around the rod to form the L-ring and probably protects the motor/basal body from shearing forces during rotation. This is Flagellar P-ring protein from Shewanella sp. (strain ANA-3).